Reading from the N-terminus, the 311-residue chain is Transcription initiation factor IIB (311 aa).

The segment at 11–42 adopts a TFIIB-type zinc-finger fold; that stretch reads KETKCPECGSTKLINDHERGEVVCGACGLVID. Residues cysteine 15, cysteine 18, cysteine 34, and cysteine 37 each coordinate Zn(2+). 2 tandem repeats follow at residues 128–211 and 222–303.

Belongs to the TFIIB family.

Its function is as follows. Stabilizes TBP binding to an archaeal box-A promoter. Also responsible for recruiting RNA polymerase II to the pre-initiation complex (DNA-TBP-TFIIB). This chain is Transcription initiation factor IIB, found in Methanosphaera stadtmanae (strain ATCC 43021 / DSM 3091 / JCM 11832 / MCB-3).